Here is a 355-residue protein sequence, read N- to C-terminus: Serum paraoxonase/arylesterase 1 (355 aa).

An intrachain disulfide couples Cys42 to Cys353. Ca(2+) is bound by residues Glu53 and Asp54. His115 (proton acceptor) is an active-site residue. Residues Ile117, Asn168, Asp169, and Asn224 each coordinate Ca(2+). The N-linked (GlcNAc...) asparagine glycan is linked to Asn253. Ca(2+) is bound by residues Asp269 and Asn270. N-linked (GlcNAc...) asparagine glycosylation is found at Asn270 and Asn324.

The protein belongs to the paraoxonase family. As to quaternary structure, homodimer. Interacts with CLU. The cofactor is Ca(2+). Glycosylated. In terms of processing, the signal sequence is not cleaved. As to expression, plasma. Associated with HDL.

The protein resides in the secreted. The protein localises to the extracellular space. It carries out the reaction a phenyl acetate + H2O = a phenol + acetate + H(+). The catalysed reaction is An aryl dialkyl phosphate + H2O = dialkyl phosphate + an aryl alcohol.. The enzyme catalyses an N-acyl-L-homoserine lactone + H2O = an N-acyl-L-homoserine + H(+). Functionally, hydrolyzes the toxic metabolites of a variety of organophosphorus insecticides. Capable of hydrolyzing a broad spectrum of organophosphate substrates and lactones, and a number of aromatic carboxylic acid esters. Mediates an enzymatic protection of low density lipoproteins against oxidative modification. This is Serum paraoxonase/arylesterase 1 (Pon1) from Rattus norvegicus (Rat).